Here is a 261-residue protein sequence, read N- to C-terminus: Kallikrein 1-related peptidase b11 (261 aa).

Positions 1 to 18 are cleaved as a signal peptide; the sequence is MWFLILFLALSLGGIDAA. Positions 19–24 are cleaved as a propeptide — activation peptide; that stretch reads PPVQSR. The 234-residue stretch at 25 to 258 folds into the Peptidase S1 domain; that stretch reads IVGGFNCEKN…FTNWIKDTMA (234 aa). Disulfide bonds link C31–C173, C50–C66, C152–C219, C184–C198, and C209–C234. Catalysis depends on H65, which acts as the Charge relay system. N-linked (GlcNAc...) asparagine glycosylation occurs at N102. Catalysis depends on D120, which acts as the Charge relay system. S213 acts as the Charge relay system in catalysis.

Belongs to the peptidase S1 family. Kallikrein subfamily.

The catalysed reaction is Preferential cleavage of Arg-|-Xaa bonds in small molecule substrates. Highly selective action to release kallidin (lysyl-bradykinin) from kininogen involves hydrolysis of Met-|-Xaa or Leu-|-Xaa.. Its function is as follows. Glandular kallikreins cleave Met-Lys and Arg-Ser bonds in kininogen to release Lys-bradykinin. The protein is Kallikrein 1-related peptidase b11 (Klk1b11) of Mus musculus (Mouse).